A 207-amino-acid chain; its full sequence is Guanylate kinase (207 aa).

Residues 5 to 185 (GFVLLISGPS…SYEALRAILI (181 aa)) form the Guanylate kinase-like domain. 12–19 (GPSGAGKS) serves as a coordination point for ATP.

The protein belongs to the guanylate kinase family.

The protein resides in the cytoplasm. The enzyme catalyses GMP + ATP = GDP + ADP. Functionally, essential for recycling GMP and indirectly, cGMP. The protein is Guanylate kinase (gmk) of Campylobacter jejuni subsp. jejuni serotype O:2 (strain ATCC 700819 / NCTC 11168).